A 218-amino-acid chain; its full sequence is MLGFLEKVADYTKEAVSAAKYLVDGLGVTFDHMRRRPVTVQYPYEKLIPSERYRGRIHYEFDKCIACEVCVRVCPINLPVVDWVMNKETKKKELRNYSIDFGACIFCGNCVEYCPTNCLSMTEEYELSAFDRHSLNYDNVALGRLPTSVTSDPSVRPLRELPYLPKGIMDPHELPANQLRAGKLPSQIIKELQADKSEEEGKNNSSDMVPNKLNSTNK.

4Fe-4S ferredoxin-type domains are found at residues 55–84 (GRIHYEFDKCIACEVCVRVCPINLPVVDWV) and 95–124 (RNYSIDFGACIFCGNCVEYCPTNCLSMTEE). Residues C64, C67, C70, C74, C104, C107, C110, and C114 each contribute to the [4Fe-4S] cluster site. Positions 179-218 (LRAGKLPSQIIKELQADKSEEEGKNNSSDMVPNKLNSTNK) are disordered. Residues 192–202 (LQADKSEEEGK) are compositionally biased toward basic and acidic residues. A compositionally biased stretch (polar residues) spans 203–218 (NNSSDMVPNKLNSTNK).

It belongs to the complex I 23 kDa subunit family. In terms of assembly, NDH-1 is composed of at least 11 different subunits. It depends on [4Fe-4S] cluster as a cofactor.

Its subcellular location is the cellular thylakoid membrane. The catalysed reaction is a plastoquinone + NADH + (n+1) H(+)(in) = a plastoquinol + NAD(+) + n H(+)(out). It carries out the reaction a plastoquinone + NADPH + (n+1) H(+)(in) = a plastoquinol + NADP(+) + n H(+)(out). In terms of biological role, NDH-1 shuttles electrons from an unknown electron donor, via FMN and iron-sulfur (Fe-S) centers, to quinones in the respiratory and/or the photosynthetic chain. The immediate electron acceptor for the enzyme in this species is believed to be plastoquinone. Couples the redox reaction to proton translocation, and thus conserves the redox energy in a proton gradient. This is NAD(P)H-quinone oxidoreductase subunit I from Prochlorococcus marinus (strain NATL2A).